The chain runs to 257 residues: MKPLRLSSLDPVRMPEWRWAPFLSHAINALIPLKPEPYPVAPEFLQREGKTGSKSQPIKVTTCTWACRTKKFRQVRAACVEAGSSASVLNFVINPYHTFDLPFFGADLVTLPSGHLLALDLQPAITSDERHTKQVWERLMPIFEQWRVRLPEGGPIPEEAKPYFSPGFLWTRLHLGSEGNQLIDEVIMPAFRDYLNLYLDLVEMAEEVSPQRAFKLLEGQKRYLSYRGKKDPARAMLARFHGHQWTESYIHNVLFDL.

The protein belongs to the HY2 family.

The catalysed reaction is (3Z)-phycoerythrobilin + oxidized 2[4Fe-4S]-[ferredoxin] = 15,16-dihydrobiliverdin + reduced 2[4Fe-4S]-[ferredoxin] + 2 H(+). Catalyzes the two-electron reduction of the C2 and C3(1) diene system of 15,16-dihydrobiliverdin. The chain is Phycoerythrobilin:ferredoxin oxidoreductase from Prochlorococcus marinus (strain MIT 9303).